The primary structure comprises 152 residues: Deoxyuridine 5'-triphosphate nucleotidohydrolase (152 aa).

Residues 71–73 (RSG), N84, 88–90 (LID), and M98 each bind substrate.

It belongs to the dUTPase family. It depends on Mg(2+) as a cofactor.

The enzyme catalyses dUTP + H2O = dUMP + diphosphate + H(+). It functions in the pathway pyrimidine metabolism; dUMP biosynthesis; dUMP from dCTP (dUTP route): step 2/2. In terms of biological role, this enzyme is involved in nucleotide metabolism: it produces dUMP, the immediate precursor of thymidine nucleotides and it decreases the intracellular concentration of dUTP so that uracil cannot be incorporated into DNA. This is Deoxyuridine 5'-triphosphate nucleotidohydrolase from Shewanella piezotolerans (strain WP3 / JCM 13877).